Consider the following 1149-residue polypeptide: DNA polymerase (1149 aa).

Polar residues predominate over residues 1 to 28 (MSLVQSHGTSGLFTEPPNSINQQESSGP). Residues 1 to 49 (MSLVQSHGTSGLFTEPPNSINQQESSGPSLPAQDATQASASSARAGATP) form a disordered region. Positions 31–49 (PAQDATQASASSARAGATP) are enriched in low complexity.

Belongs to the DNA polymerase type-B family. Heterodimer with the terminal protein; this heterodimer binds to bp 9 to 18 of the genome. Forms a complex with viral pTP, DBP and hosts NFIA and POU2F1/OCT1 for initiation of replication.

Its subcellular location is the host nucleus. The enzyme catalyses DNA(n) + a 2'-deoxyribonucleoside 5'-triphosphate = DNA(n+1) + diphosphate. Functionally, eukaryotic-type DNA polymerase involved in viral genomic replication. DNA synthesis is protein primed, and acts in a strand displacement replication. Assembles in complex with viral pTP, DBP, host NFIA and host POU2F1/OCT1 on viral origin of replication. The polymerase covalently transfers dCMP onto pTP, thereby initiating complementary strand synthesis. The protein is DNA polymerase of Canine adenovirus serotype 1 (strain CLL) (CAdV-1).